Here is a 155-residue protein sequence, read N- to C-terminus: Small ribosomal subunit protein bS16 (155 aa).

Residues 113–155 (ADGAPTGEAIQQKKKKAPKKAEAAEAEAPAEEPAAESADAASE) are disordered. The segment covering 136 to 146 (AEAEAPAEEPA) has biased composition (acidic residues).

The protein belongs to the bacterial ribosomal protein bS16 family.

The polypeptide is Small ribosomal subunit protein bS16 (Mycobacteroides abscessus (strain ATCC 19977 / DSM 44196 / CCUG 20993 / CIP 104536 / JCM 13569 / NCTC 13031 / TMC 1543 / L948) (Mycobacterium abscessus)).